A 205-amino-acid polypeptide reads, in one-letter code: Ras-related protein RABC2b (205 aa).

A GTP-binding site is contributed by 20-27 (GDSGVGKS). The Effector region signature appears at 41-49 (LAPTIGVDF). GTP-binding positions include 67–71 (DTAGQ), 127–130 (NKVD), and 157–158 (SA). Residues C202 and C203 are each lipidated (S-geranylgeranyl cysteine).

Belongs to the small GTPase superfamily. Rab family.

Its subcellular location is the cell membrane. Functionally, intracellular vesicle trafficking and protein transport. The sequence is that of Ras-related protein RABC2b (RABC2B) from Arabidopsis thaliana (Mouse-ear cress).